The chain runs to 222 residues: Cytidylate kinase (222 aa).

11–19 (GPSGSGKST) provides a ligand contact to ATP.

It belongs to the cytidylate kinase family. Type 1 subfamily.

The protein resides in the cytoplasm. It carries out the reaction CMP + ATP = CDP + ADP. The enzyme catalyses dCMP + ATP = dCDP + ADP. The sequence is that of Cytidylate kinase from Ureaplasma urealyticum serovar 10 (strain ATCC 33699 / Western).